Reading from the N-terminus, the 286-residue chain is Probable aquaporin PIP-type pTOM75 (286 aa).

A disordered region spans residues 1–35; the sequence is MAENKEEDVKLGANKFRETQPLGTAAQTDKDYKEP. Over 1 to 55 the chain is Cytoplasmic; the sequence is MAENKEEDVKLGANKFRETQPLGTAAQTDKDYKEPPPAPLFEPGELSSWSFYRAG. The span at 7–18 shows a compositional bias: basic and acidic residues; it reads EDVKLGANKFRE. A helical membrane pass occupies residues 56–76; it reads IAEFMATFLFLYITILTVMGL. Over 77 to 89 the chain is Extracellular; it reads KRSDSLCSSVGIQ. The chain crosses the membrane as a helical span at residues 90 to 110; that stretch reads GVAWAFGGMIFALVYCTAGIS. Over 111–133 the chain is Cytoplasmic; the sequence is GGHINPAVTFGLFLARKLSLTRA. The short motif at 115-117 is the NPA 1 element; sequence NPA. Residues 134-154 traverse the membrane as a helical segment; the sequence is VFYMVMQCLGAICGAGVVKGF. Residues 155–175 lie on the Extracellular side of the membrane; that stretch reads MVGPYQRLGGGANVVNPGYTK. The chain crosses the membrane as a helical span at residues 176–196; it reads GDGLGAEIIGTFVLVYTVFSA. At 197–209 the chain is on the cytoplasmic side; the sequence is TDAKRNARDSHVP. Residues 210 to 230 traverse the membrane as a helical segment; it reads ILAPLPIGFAVFLVHLATIPI. At 231-257 the chain is on the extracellular side; sequence TGTGINPARSLGAAIIYNDEHAWNDHW. The NPA 2 signature appears at 236–238; the sequence is NPA. The chain crosses the membrane as a helical span at residues 258-278; sequence IFWVGPMIGAALAAIYHQIII. The Cytoplasmic portion of the chain corresponds to 279–286; sequence RAMPFHRS.

The protein belongs to the MIP/aquaporin (TC 1.A.8) family. PIP (TC 1.A.8.11) subfamily. Roots, ripening fruit and senescing leaves.

It localises to the cell membrane. Its function is as follows. Aquaporins facilitate the transport of water and small neutral solutes across cell membranes. In Solanum lycopersicum (Tomato), this protein is Probable aquaporin PIP-type pTOM75.